A 586-amino-acid polypeptide reads, in one-letter code: Phosphomethylpyrimidine synthase (586 aa).

Residues 1-58 are disordered; that stretch reads MKQSVSAEQIELKSSLPGSKKVYVDGPREGMKVPMREIEQSDTNGVPNPPIRVYDTSG. A compositionally biased stretch (basic and acidic residues) spans 22-39; sequence VYVDGPREGMKVPMREIE. Residues Asn193, Met222, Tyr251, His287, 307-309, 348-351, and Glu387 contribute to the substrate site; these read SRG and DGLR. His391 serves as a coordination point for Zn(2+). Tyr414 is a binding site for substrate. Residue His455 participates in Zn(2+) binding. Residues Cys535, Cys538, and Cys543 each coordinate [4Fe-4S] cluster.

The protein belongs to the ThiC family. Requires [4Fe-4S] cluster as cofactor.

The enzyme catalyses 5-amino-1-(5-phospho-beta-D-ribosyl)imidazole + S-adenosyl-L-methionine = 4-amino-2-methyl-5-(phosphooxymethyl)pyrimidine + CO + 5'-deoxyadenosine + formate + L-methionine + 3 H(+). The protein operates within cofactor biosynthesis; thiamine diphosphate biosynthesis. In terms of biological role, catalyzes the synthesis of the hydroxymethylpyrimidine phosphate (HMP-P) moiety of thiamine from aminoimidazole ribotide (AIR) in a radical S-adenosyl-L-methionine (SAM)-dependent reaction. This Bacillus anthracis (strain A0248) protein is Phosphomethylpyrimidine synthase.